The primary structure comprises 150 residues: 3-hydroxyacyl-[acyl-carrier-protein] dehydratase FabZ (150 aa).

His52 is a catalytic residue.

The protein belongs to the thioester dehydratase family. FabZ subfamily.

It localises to the cytoplasm. The catalysed reaction is a (3R)-hydroxyacyl-[ACP] = a (2E)-enoyl-[ACP] + H2O. Functionally, involved in unsaturated fatty acids biosynthesis. Catalyzes the dehydration of short chain beta-hydroxyacyl-ACPs and long chain saturated and unsaturated beta-hydroxyacyl-ACPs. The protein is 3-hydroxyacyl-[acyl-carrier-protein] dehydratase FabZ of Cupriavidus metallidurans (strain ATCC 43123 / DSM 2839 / NBRC 102507 / CH34) (Ralstonia metallidurans).